Reading from the N-terminus, the 425-residue chain is Serine--tRNA ligase (425 aa).

Residue Thr233 to Glu235 participates in L-serine binding. Arg264–Glu266 is a binding site for ATP. Residue Glu287 coordinates L-serine. Glu351–Ser354 is an ATP binding site. Ser386 provides a ligand contact to L-serine.

It belongs to the class-II aminoacyl-tRNA synthetase family. Type-1 seryl-tRNA synthetase subfamily. Homodimer. The tRNA molecule binds across the dimer.

The protein localises to the cytoplasm. The enzyme catalyses tRNA(Ser) + L-serine + ATP = L-seryl-tRNA(Ser) + AMP + diphosphate + H(+). It catalyses the reaction tRNA(Sec) + L-serine + ATP = L-seryl-tRNA(Sec) + AMP + diphosphate + H(+). It participates in aminoacyl-tRNA biosynthesis; selenocysteinyl-tRNA(Sec) biosynthesis; L-seryl-tRNA(Sec) from L-serine and tRNA(Sec): step 1/1. In terms of biological role, catalyzes the attachment of serine to tRNA(Ser). Is also able to aminoacylate tRNA(Sec) with serine, to form the misacylated tRNA L-seryl-tRNA(Sec), which will be further converted into selenocysteinyl-tRNA(Sec). This chain is Serine--tRNA ligase, found in Thermosipho melanesiensis (strain DSM 12029 / CIP 104789 / BI429).